We begin with the raw amino-acid sequence, 434 residues long: Glucose-1-phosphate adenylyltransferase (434 aa).

Residues Tyr112, Gly178, 193–194 (EK), and Ser211 contribute to the alpha-D-glucose 1-phosphate site.

This sequence belongs to the bacterial/plant glucose-1-phosphate adenylyltransferase family. In terms of assembly, homotetramer.

It carries out the reaction alpha-D-glucose 1-phosphate + ATP + H(+) = ADP-alpha-D-glucose + diphosphate. It functions in the pathway glycan biosynthesis; glycogen biosynthesis. Involved in the biosynthesis of ADP-glucose, a building block required for the elongation reactions to produce glycogen. Catalyzes the reaction between ATP and alpha-D-glucose 1-phosphate (G1P) to produce pyrophosphate and ADP-Glc. The chain is Glucose-1-phosphate adenylyltransferase from Mannheimia succiniciproducens (strain KCTC 0769BP / MBEL55E).